The following is a 421-amino-acid chain: Testin (421 aa).

In terms of domain architecture, PET spans 92 to 199; that stretch reads MILTNPVAAK…GDVKLPCEMD (108 aa). Residues 133 to 164 form a disordered region; the sequence is EKQPVAGSEGAQYRKKQLAKQLPAHDQDPSKC. Basic and acidic residues predominate over residues 155–164; it reads PAHDQDPSKC. LIM zinc-binding domains follow at residues 234 to 297, 299 to 359, and 362 to 421; these read YSCY…CDSE, PRCA…NHAV, and QGCH…KRMS.

This sequence belongs to the prickle / espinas / testin family. As to quaternary structure, interacts via LIM domain 1 with ZYX. Interacts (via LIM domain 3) with ENAH and VASP. Interacts with ALKBH4, talin, actin, alpha-actinin, GRIP1 and PXN. Interacts (via LIM domain 2) with ACTL7A (via N-terminus). Heterodimer with ACTL7A; the heterodimer interacts with ENAH to form a heterotrimer.

Its subcellular location is the cytoplasm. The protein localises to the cell junction. It localises to the focal adhesion. Functionally, scaffold protein that may play a role in cell adhesion, cell spreading and in the reorganization of the actin cytoskeleton. Plays a role in the regulation of cell proliferation. May act as a tumor suppressor. The protein is Testin (TES) of Pan troglodytes (Chimpanzee).